The chain runs to 281 residues: Undecaprenyl-diphosphatase (281 aa).

8 consecutive transmembrane segments (helical) span residues 4-24 (IEIL…WLPI), 45-65 (AFMS…VMVI), 89-109 (WLKV…DDWF), 113-133 (FHNM…FIYL), 152-172 (LPYT…LPGT), 190-210 (SVVT…ASAL), 225-245 (GQLF…MVAI), and 257-277 (FTLF…YSFV).

It belongs to the UppP family.

The protein resides in the cell membrane. It carries out the reaction di-trans,octa-cis-undecaprenyl diphosphate + H2O = di-trans,octa-cis-undecaprenyl phosphate + phosphate + H(+). Functionally, catalyzes the dephosphorylation of undecaprenyl diphosphate (UPP). Confers resistance to bacitracin. The sequence is that of Undecaprenyl-diphosphatase from Streptococcus pneumoniae (strain Hungary19A-6).